The sequence spans 684 residues: Glycine--tRNA ligase beta subunit (684 aa).

The protein belongs to the class-II aminoacyl-tRNA synthetase family. In terms of assembly, tetramer of two alpha and two beta subunits.

The protein localises to the cytoplasm. The catalysed reaction is tRNA(Gly) + glycine + ATP = glycyl-tRNA(Gly) + AMP + diphosphate. This is Glycine--tRNA ligase beta subunit from Pseudomonas aeruginosa (strain UCBPP-PA14).